A 269-amino-acid polypeptide reads, in one-letter code: Tryptophan synthase alpha chain (269 aa).

Residues glutamate 50 and aspartate 61 each act as proton acceptor in the active site.

The protein belongs to the TrpA family. In terms of assembly, tetramer of two alpha and two beta chains.

The catalysed reaction is (1S,2R)-1-C-(indol-3-yl)glycerol 3-phosphate + L-serine = D-glyceraldehyde 3-phosphate + L-tryptophan + H2O. It participates in amino-acid biosynthesis; L-tryptophan biosynthesis; L-tryptophan from chorismate: step 5/5. Its function is as follows. The alpha subunit is responsible for the aldol cleavage of indoleglycerol phosphate to indole and glyceraldehyde 3-phosphate. The chain is Tryptophan synthase alpha chain from Francisella tularensis subsp. holarctica (strain FTNF002-00 / FTA).